The primary structure comprises 96 residues: Co-chaperonin GroES (96 aa).

It belongs to the GroES chaperonin family. In terms of assembly, heptamer of 7 subunits arranged in a ring. Interacts with the chaperonin GroEL.

The protein resides in the cytoplasm. Together with the chaperonin GroEL, plays an essential role in assisting protein folding. The GroEL-GroES system forms a nano-cage that allows encapsulation of the non-native substrate proteins and provides a physical environment optimized to promote and accelerate protein folding. GroES binds to the apical surface of the GroEL ring, thereby capping the opening of the GroEL channel. This chain is Co-chaperonin GroES, found in Shewanella pealeana (strain ATCC 700345 / ANG-SQ1).